The following is a 229-amino-acid chain: Phosphoglycolate phosphatase (229 aa).

Asp18 functions as the Nucleophile in the catalytic mechanism. Residues Asp18, Asp20, and Asp176 each coordinate Mg(2+).

This sequence belongs to the HAD-like hydrolase superfamily. CbbY/CbbZ/Gph/YieH family. Mg(2+) is required as a cofactor.

It carries out the reaction 2-phosphoglycolate + H2O = glycolate + phosphate. It participates in organic acid metabolism; glycolate biosynthesis; glycolate from 2-phosphoglycolate: step 1/1. Functionally, specifically catalyzes the dephosphorylation of 2-phosphoglycolate. Is involved in the dissimilation of the intracellular 2-phosphoglycolate formed during the DNA repair of 3'-phosphoglycolate ends, a major class of DNA lesions induced by oxidative stress. The protein is Phosphoglycolate phosphatase of Xylella fastidiosa (strain 9a5c).